A 90-amino-acid chain; its full sequence is Phosphocarrier protein NPr (90 aa).

Residues 2–90 (TVKQTVEISN…ALFNAGFDED (89 aa)) form the HPr domain. The active-site Pros-phosphohistidine intermediate is H16.

The protein belongs to the HPr family.

The protein resides in the cytoplasm. Its function is as follows. Component of the phosphoenolpyruvate-dependent nitrogen-metabolic phosphotransferase system (nitrogen-metabolic PTS), that seems to be involved in regulating nitrogen metabolism. The phosphoryl group from phosphoenolpyruvate (PEP) is transferred to the phosphoryl carrier protein NPr by enzyme I-Ntr. Phospho-NPr then transfers it to EIIA-Ntr. Could function in the transcriptional regulation of sigma-54 dependent operons in conjunction with the NPr (PtsO) and EIIA-Ntr (PtsN) proteins. This Klebsiella oxytoca protein is Phosphocarrier protein NPr (ptsO).